The chain runs to 196 residues: uncharacterized protein (196 aa).

Residues 71-87 form a helical membrane-spanning segment; it reads YVKLIGTGCYVAILISG.

It is found in the membrane. This is an uncharacterized protein from Dictyostelium discoideum (Social amoeba).